The following is a 213-amino-acid chain: Thiopurine S-methyltransferase (213 aa).

The S-adenosyl-L-methionine site is built by tryptophan 10, methionine 45, glutamate 66, and arginine 120.

It belongs to the class I-like SAM-binding methyltransferase superfamily. TPMT family.

It is found in the cytoplasm. It catalyses the reaction S-adenosyl-L-methionine + a thiopurine = S-adenosyl-L-homocysteine + a thiopurine S-methylether.. This is Thiopurine S-methyltransferase from Photobacterium profundum (strain SS9).